A 101-amino-acid polypeptide reads, in one-letter code: Peroxisomal biogenesis factor 39 (101 aa).

It localises to the peroxisome. In terms of biological role, may be a peroxin involved in the PTS2-mediated protein import pathway. This chain is Peroxisomal biogenesis factor 39, found in Homo sapiens (Human).